Reading from the N-terminus, the 491-residue chain is Ketol-acid reductoisomerase (NADP(+)) (491 aa).

One can recognise a KARI N-terminal Rossmann domain in the interval 15–208; it reads AQLGKCRFMG…GGHRAGVLES (194 aa). Residues 45 to 48, Arg-68, Arg-76, Ser-78, and 108 to 110 each bind NADP(+); these read CGAQ and DKQ. His-132 is an active-site residue. Gly-158 is an NADP(+) binding site. 2 consecutive KARI C-terminal knotted domains span residues 209 to 344 and 345 to 484; these read SFVA…TAPQ and YEGK…MTDM. Residues Asp-217, Glu-221, Glu-389, and Glu-393 each contribute to the Mg(2+) site. Ser-414 serves as a coordination point for substrate.

It belongs to the ketol-acid reductoisomerase family. It depends on Mg(2+) as a cofactor.

It carries out the reaction (2R)-2,3-dihydroxy-3-methylbutanoate + NADP(+) = (2S)-2-acetolactate + NADPH + H(+). The enzyme catalyses (2R,3R)-2,3-dihydroxy-3-methylpentanoate + NADP(+) = (S)-2-ethyl-2-hydroxy-3-oxobutanoate + NADPH + H(+). It functions in the pathway amino-acid biosynthesis; L-isoleucine biosynthesis; L-isoleucine from 2-oxobutanoate: step 2/4. Its pathway is amino-acid biosynthesis; L-valine biosynthesis; L-valine from pyruvate: step 2/4. Involved in the biosynthesis of branched-chain amino acids (BCAA). Catalyzes an alkyl-migration followed by a ketol-acid reduction of (S)-2-acetolactate (S2AL) to yield (R)-2,3-dihydroxy-isovalerate. In the isomerase reaction, S2AL is rearranged via a Mg-dependent methyl migration to produce 3-hydroxy-3-methyl-2-ketobutyrate (HMKB). In the reductase reaction, this 2-ketoacid undergoes a metal-dependent reduction by NADPH to yield (R)-2,3-dihydroxy-isovalerate. This chain is Ketol-acid reductoisomerase (NADP(+)), found in Salmonella arizonae (strain ATCC BAA-731 / CDC346-86 / RSK2980).